We begin with the raw amino-acid sequence, 251 residues long: Triosephosphate isomerase (251 aa).

9–11 is a substrate binding site; the sequence is NWK. His95 serves as the catalytic Electrophile. Residue Glu167 is the Proton acceptor of the active site. Substrate-binding positions include Gly173, Ser212, and 233–234; that span reads GG.

It belongs to the triosephosphate isomerase family. As to quaternary structure, homodimer.

The protein resides in the cytoplasm. It catalyses the reaction D-glyceraldehyde 3-phosphate = dihydroxyacetone phosphate. The protein operates within carbohydrate biosynthesis; gluconeogenesis. It functions in the pathway carbohydrate degradation; glycolysis; D-glyceraldehyde 3-phosphate from glycerone phosphate: step 1/1. In terms of biological role, involved in the gluconeogenesis. Catalyzes stereospecifically the conversion of dihydroxyacetone phosphate (DHAP) to D-glyceraldehyde-3-phosphate (G3P). The sequence is that of Triosephosphate isomerase from Vibrio sp. (strain ANT-300).